Consider the following 739-residue polypeptide: Oxysterol-binding protein-related protein 9 (739 aa).

Positions 2–99 (ASIMEGPLSK…WIHALEETIL (98 aa)) constitute a PH domain. Disordered stretches follow at residues 220–292 (TQAS…SYSS) and 306–371 (SSTS…ESVE). A compositionally biased stretch (polar residues) spans 249–259 (NLGSRQSPTPI). Residues 260-276 (STGSGQSAPSSSLTSPS) show a composition bias toward low complexity. 3 stretches are compositionally biased toward polar residues: residues 277 to 292 (HVNL…SYSS), 306 to 330 (SSTS…STGA), and 338 to 352 (TESL…TNEA).

Belongs to the OSBP family.

It catalyses the reaction a 1,2-diacyl-sn-glycero-3-phospho-(1D-myo-inositol 4-phosphate)(out) + a 1,2-diacyl-sn-glycero-3-phospho-L-serine(in) = a 1,2-diacyl-sn-glycero-3-phospho-(1D-myo-inositol 4-phosphate)(in) + a 1,2-diacyl-sn-glycero-3-phospho-L-serine(out). Interacts with OSBPL11 to function as lipid transfer proteins. Together they form a heterodimer that localizes at the ER-trans-Golgi membrane contact sites, and exchanges phosphatidylserine (1,2-diacyl-sn-glycero-3-phospho-L-serine, PS) for phosphatidylinositol-4-phosphate (1,2-diacyl-sn-glycero-3-phospho-(1D-myo-inositol 4-phosphate), PI(4)P) between the two organelles, a step that is critical for sphingomyelin synthesis in the Golgi complex. This is Oxysterol-binding protein-related protein 9 (osbpl9) from Xenopus tropicalis (Western clawed frog).